We begin with the raw amino-acid sequence, 1266 residues long: Kinesin-like protein KIN-12G (1266 aa).

Residues 1 to 22 (MPSDCGDDDHGGGSAPAGFELQ) are disordered. Residues 32 to 369 (NVQVVIRVRP…LKFAQRAKYI (338 aa)) enclose the Kinesin motor domain. ATP is bound at residue 113 to 120 (GQTGSGKT). 4 coiled-coil regions span residues 613–668 (MEFI…SEAV), 817–854 (RSEL…FKRK), 1029–1060 (ARES…AERV), and 1084–1120 (SELL…MNRH).

It belongs to the TRAFAC class myosin-kinesin ATPase superfamily. Kinesin family. KIN-12 subfamily.

The polypeptide is Kinesin-like protein KIN-12G (Oryza sativa subsp. japonica (Rice)).